Consider the following 195-residue polypeptide: Xanthine phosphoribosyltransferase (195 aa).

2 residues coordinate xanthine: L20 and N27. 128-132 is a 5-phospho-alpha-D-ribose 1-diphosphate binding site; sequence ANGQA. K156 lines the xanthine pocket.

This sequence belongs to the purine/pyrimidine phosphoribosyltransferase family. Xpt subfamily. As to quaternary structure, homodimer.

It is found in the cytoplasm. The catalysed reaction is XMP + diphosphate = xanthine + 5-phospho-alpha-D-ribose 1-diphosphate. It functions in the pathway purine metabolism; XMP biosynthesis via salvage pathway; XMP from xanthine: step 1/1. Functionally, converts the preformed base xanthine, a product of nucleic acid breakdown, to xanthosine 5'-monophosphate (XMP), so it can be reused for RNA or DNA synthesis. The protein is Xanthine phosphoribosyltransferase of Latilactobacillus sakei subsp. sakei (strain 23K) (Lactobacillus sakei subsp. sakei).